The primary structure comprises 85 residues: MKVTLIAILTCAAVLVLHTTAAEELEAESQLMEVGMPDTELAAVDEERLFERSVSCEIEKEGNKDCKKKKCKGGWKCKFNMCVKV.

An N-terminal signal peptide occupies residues 1-22; that stretch reads MKVTLIAILTCAAVLVLHTTAA. A propeptide spanning residues 23–48 is cleaved from the precursor; that stretch reads EELEAESQLMEVGMPDTELAAVDEER. Cystine bridges form between Cys-56–Cys-77 and Cys-71–Cys-82.

This sequence belongs to the neurotoxin 12 (Hwtx-2) family. 02 (Hwtx-2) subfamily. Expressed by the venom gland.

The protein resides in the secreted. In terms of biological role, postsynaptic neurotoxin. The sequence is that of U4-theraphotoxin-Hhn1ab from Cyriopagopus hainanus (Chinese bird spider).